The primary structure comprises 245 residues: DNA repair protein RecO (245 aa).

Belongs to the RecO family.

Functionally, involved in DNA repair and RecF pathway recombination. The protein is DNA repair protein RecO of Porphyromonas gingivalis (strain ATCC BAA-308 / W83).